Here is a 131-residue protein sequence, read N- to C-terminus: Torsin-1A-interacting protein 2, isoform IFRG15 (131 aa).

The protein is Torsin-1A-interacting protein 2, isoform IFRG15 (TOR1AIP2) of Homo sapiens (Human).